A 311-amino-acid polypeptide reads, in one-letter code: Acetyl-coenzyme A carboxylase carboxyl transferase subunit alpha (311 aa).

The CoA carboxyltransferase C-terminal domain maps to 32 to 289 (ELNLLEERLR…KSVLEQKLAQ (258 aa)).

The protein belongs to the AccA family. Acetyl-CoA carboxylase is a heterohexamer composed of biotin carboxyl carrier protein (AccB), biotin carboxylase (AccC) and two subunits each of ACCase subunit alpha (AccA) and ACCase subunit beta (AccD).

The protein localises to the cytoplasm. The catalysed reaction is N(6)-carboxybiotinyl-L-lysyl-[protein] + acetyl-CoA = N(6)-biotinyl-L-lysyl-[protein] + malonyl-CoA. Its pathway is lipid metabolism; malonyl-CoA biosynthesis; malonyl-CoA from acetyl-CoA: step 1/1. Its function is as follows. Component of the acetyl coenzyme A carboxylase (ACC) complex. First, biotin carboxylase catalyzes the carboxylation of biotin on its carrier protein (BCCP) and then the CO(2) group is transferred by the carboxyltransferase to acetyl-CoA to form malonyl-CoA. In Exiguobacterium sibiricum (strain DSM 17290 / CCUG 55495 / CIP 109462 / JCM 13490 / 255-15), this protein is Acetyl-coenzyme A carboxylase carboxyl transferase subunit alpha.